The primary structure comprises 361 residues: UDP-N-acetylglucosamine--N-acetylmuramyl-(pentapeptide) pyrophosphoryl-undecaprenol N-acetylglucosamine transferase (361 aa).

UDP-N-acetyl-alpha-D-glucosamine is bound by residues 12–14, Asn124, Arg163, Ser189, Ile241, 260–265, and Gln286; these read TGG and ALTVSE.

It belongs to the glycosyltransferase 28 family. MurG subfamily.

The protein resides in the cell inner membrane. The enzyme catalyses di-trans,octa-cis-undecaprenyl diphospho-N-acetyl-alpha-D-muramoyl-L-alanyl-D-glutamyl-meso-2,6-diaminopimeloyl-D-alanyl-D-alanine + UDP-N-acetyl-alpha-D-glucosamine = di-trans,octa-cis-undecaprenyl diphospho-[N-acetyl-alpha-D-glucosaminyl-(1-&gt;4)]-N-acetyl-alpha-D-muramoyl-L-alanyl-D-glutamyl-meso-2,6-diaminopimeloyl-D-alanyl-D-alanine + UDP + H(+). The protein operates within cell wall biogenesis; peptidoglycan biosynthesis. Cell wall formation. Catalyzes the transfer of a GlcNAc subunit on undecaprenyl-pyrophosphoryl-MurNAc-pentapeptide (lipid intermediate I) to form undecaprenyl-pyrophosphoryl-MurNAc-(pentapeptide)GlcNAc (lipid intermediate II). This Aeromonas hydrophila subsp. hydrophila (strain ATCC 7966 / DSM 30187 / BCRC 13018 / CCUG 14551 / JCM 1027 / KCTC 2358 / NCIMB 9240 / NCTC 8049) protein is UDP-N-acetylglucosamine--N-acetylmuramyl-(pentapeptide) pyrophosphoryl-undecaprenol N-acetylglucosamine transferase.